A 173-amino-acid polypeptide reads, in one-letter code: NADH-ubiquinone oxidoreductase chain 6 (173 aa).

Transmembrane regions (helical) follow at residues 1–21 (MTYF…AVAS), 27–47 (YGVV…LSLG), 48–68 (VSFV…VVFV), 87–107 (VVGY…VGGF), and 139–159 (CGVG…FVVL).

It belongs to the complex I subunit 6 family.

The protein localises to the mitochondrion membrane. The catalysed reaction is a ubiquinone + NADH + 5 H(+)(in) = a ubiquinol + NAD(+) + 4 H(+)(out). Its function is as follows. Core subunit of the mitochondrial membrane respiratory chain NADH dehydrogenase (Complex I) that is believed to belong to the minimal assembly required for catalysis. Complex I functions in the transfer of electrons from NADH to the respiratory chain. The immediate electron acceptor for the enzyme is believed to be ubiquinone. This chain is NADH-ubiquinone oxidoreductase chain 6 (MT-ND6), found in Aethia pygmaea (Whiskered auklet).